Reading from the N-terminus, the 291-residue chain is 2-C-methyl-D-erythritol 4-phosphate cytidylyltransferase (291 aa).

The disordered stretch occupies residues 1–23 (MTERDFDTPVETPTVQPAPAQGT).

The protein belongs to the IspD/TarI cytidylyltransferase family. IspD subfamily.

It carries out the reaction 2-C-methyl-D-erythritol 4-phosphate + CTP + H(+) = 4-CDP-2-C-methyl-D-erythritol + diphosphate. It functions in the pathway isoprenoid biosynthesis; isopentenyl diphosphate biosynthesis via DXP pathway; isopentenyl diphosphate from 1-deoxy-D-xylulose 5-phosphate: step 2/6. In terms of biological role, catalyzes the formation of 4-diphosphocytidyl-2-C-methyl-D-erythritol from CTP and 2-C-methyl-D-erythritol 4-phosphate (MEP). The protein is 2-C-methyl-D-erythritol 4-phosphate cytidylyltransferase of Bifidobacterium longum subsp. infantis (strain ATCC 15697 / DSM 20088 / JCM 1222 / NCTC 11817 / S12).